Consider the following 63-residue polypeptide: 2-hydroxymuconate tautomerase (63 aa).

The Proton acceptor; via imino nitrogen role is filled by proline 2.

It belongs to the 4-oxalocrotonate tautomerase family. Homohexamer.

It carries out the reaction (2Z,4E)-2-hydroxyhexa-2,4-dienedioate = (3E)-2-oxohex-3-enedioate. It participates in aromatic compound metabolism; salicylate degradation. Functionally, catalyzes the ketonization of 2-hydroxymuconate stereoselectively to yield 2-oxo-3-hexenedioate. This is 2-hydroxymuconate tautomerase (aphI) from Comamonas testosteroni (Pseudomonas testosteroni).